The chain runs to 86 residues: Small ribosomal subunit protein uS15 (86 aa).

It belongs to the universal ribosomal protein uS15 family. Part of the 30S ribosomal subunit. Forms a bridge to the 50S subunit in the 70S ribosome, contacting the 23S rRNA.

Its function is as follows. One of the primary rRNA binding proteins, it binds directly to 16S rRNA where it helps nucleate assembly of the platform of the 30S subunit by binding and bridging several RNA helices of the 16S rRNA. Functionally, forms an intersubunit bridge (bridge B4) with the 23S rRNA of the 50S subunit in the ribosome. The chain is Small ribosomal subunit protein uS15 from Mycoplasma genitalium (strain ATCC 33530 / DSM 19775 / NCTC 10195 / G37) (Mycoplasmoides genitalium).